Here is a 311-residue protein sequence, read N- to C-terminus: MRLSWLLRKSFDFGEREVAHWFPGHMAKGLKQMKTKLKNLDCIVEVHDARIPLSGRNPIFQDSLGMKPHLLILNKMDLADLTQKKRILAQLKQQGVGNVIFTDCVKDQNIKHVVPVISELVGCSQRFHREENTETCIMVIGVPNVGKSSLINALRRMHLRKGKASRVGAEPGITRSVLTKIQVSESPLIFLFDTPGVLSPRIESVETGMKLALCGTILDHLVGEDIMADYLLYILNQQMQHRYVEHYGLEKPCADIETLLKRIALKLGKTQKVKAITGVGDVNITVPNYNAAAYDFIRTFRRGQLGVVMLD.

The CP-type G domain occupies A27–P200. GTP is bound by residues N74–D77, N144–S149, and G196.

It belongs to the TRAFAC class YlqF/YawG GTPase family. MTG1 subfamily.

It localises to the mitochondrion inner membrane. Functionally, plays a role in the regulation of the mitochondrial ribosome assembly and of translational activity. Displays mitochondrial GTPase activity. The chain is Mitochondrial ribosome-associated GTPase 1 from Xenopus tropicalis (Western clawed frog).